We begin with the raw amino-acid sequence, 383 residues long: Omega-6 fatty acid desaturase, endoplasmic reticulum isozyme 2 (383 aa).

3 helical membrane-spanning segments follow: residues 61–81 (TIAFCLYYVATHYFHLLPGPL), 85–105 (GMAIYWAVQGCILTGVWVIAH), and 117–137 (LLDDIVGLILHSALLVPYFSW). Residues 105-109 (HECGH) carry the Histidine box-1 motif. The Histidine box-2 signature appears at 141-145 (HRRHH). 3 consecutive transmembrane segments (helical) span residues 179 to 199 (VLTLAVTLTLGWPLYLALNVS), 225 to 245 (IYISDAGVLAVVYGLFRLAMA), and 249 to 269 (AWVVCVYGVPLLVVNGFLVLI). The short motif at 315 to 319 (HVAHH) is the Histidine box-3 element.

It belongs to the fatty acid desaturase type 1 family.

Its subcellular location is the endoplasmic reticulum membrane. It participates in lipid metabolism; polyunsaturated fatty acid biosynthesis. Its function is as follows. ER (microsomal) omega-6 fatty acid desaturase introduces the second double bond in the biosynthesis of 18:3 fatty acids, important constituents of plant membranes. It is thought to use cytochrome b5 as an electron donor and to act on fatty acids esterified to phosphatidylcholine and, possibly, other phospholipids. This is Omega-6 fatty acid desaturase, endoplasmic reticulum isozyme 2 (FAD2-2) from Glycine max (Soybean).